Consider the following 228-residue polypeptide: Ribonuclease S-1 (228 aa).

Residues 1–27 form the signal peptide; the sequence is MGVTGMTYMFTMVFSLIVLILSSSTVG. Q36 is a binding site for RNA. A disulfide bridge links C42 with C49. H60 serves as a coordination point for RNA. Residue H60 is the Proton donor of the active site. Residues C75 and C119 are joined by a disulfide bond. N87 is a glycosylation site (N-linked (GlcNAc...) asparagine). 98–99 serves as a coordination point for RNA; sequence NV. N101 carries an N-linked (GlcNAc...) asparagine glycan. RNA is bound by residues F108, 111–112, and 115–116; these read KE and KH. E112 is an active-site residue. The active-site Proton acceptor is the H116. N-linked (GlcNAc...) asparagine glycosylation is found at N144, N157, and N175. 2 cysteine pairs are disulfide-bonded: C183/C222 and C199/C210.

It belongs to the RNase T2 family. Post-translationally, N-linked core structure at Asn-87 and Asn-101 contains xylose and fucose or consists of disaccharide (GlcNAc-GlcNAc). N-linked core structure at Asn-144 contains xylose.

The enzyme catalyses a ribonucleotidyl-ribonucleotide-RNA + H2O = a 3'-end 3'-phospho-ribonucleotide-RNA + a 5'-end dephospho-ribonucleoside-RNA + H(+). In terms of biological role, self-incompatibility (SI) is the inherited ability of a flowering plant to prevent self-fertilization by discriminating between self and non-self pollen during pollination. In many species, self-incompatibility is controlled by the single, multiallelic locus S. This Pyrus pyrifolia (Chinese pear) protein is Ribonuclease S-1.